We begin with the raw amino-acid sequence, 296 residues long: MAASGGSGGKATELLRCLPRVTLANLRPNPGARHREKRRGRGIHGGRKSGRGHKGETQRGNQPRLGFEGGQTPFYLVIPKYGYNEGHSFRRQYQPLSLNRLQYLIDLGRIDPTQPIDLTQLVNARGVTIQPLKRDYGVQLVEEGADLFAAKVNIEVQWASQLAIAAIEKNGGLITTGFYDPRSLDVLCKPVPFFMRGQPIPKRMLPPEDLVKYYTDAENRGYLADPRNVLEARKQLARKYGYVLPDITKDELYQMLSTRKDPRQIFFGLAPGWIVNMPEKKILKPTDERLLSYYSS.

The N-terminal 20 residues, 1–20 (MAASGGSGGKATELLRCLPR), are a transit peptide targeting the mitochondrion. A disordered region spans residues 25–66 (NLRPNPGARHREKRRGRGIHGGRKSGRGHKGETQRGNQPRLG). Residues 32-52 (ARHREKRRGRGIHGGRKSGRG) show a composition bias toward basic residues.

This sequence belongs to the universal ribosomal protein uL15 family. As to quaternary structure, component of the mitochondrial ribosome large subunit (39S) which comprises a 16S rRNA and about 50 distinct proteins.

The protein resides in the mitochondrion. The sequence is that of Large ribosomal subunit protein uL15m (mrpl15) from Xenopus laevis (African clawed frog).